The following is a 202-amino-acid chain: Small ribosomal subunit protein uS5 (202 aa).

Residues 1–13 show a composition bias toward gly residues; it reads MPGQQRRGGGSGG. The segment at 1 to 31 is disordered; the sequence is MPGQQRRGGGSGGSDRRERRDRSGSGPAQEK. Over residues 14 to 23 the composition is skewed to basic and acidic residues; sequence SDRRERRDRS. One can recognise an S5 DRBM domain in the interval 34 to 97; that stretch reads YVERVVAINR…EEAKKHFFKV (64 aa).

The protein belongs to the universal ribosomal protein uS5 family. Part of the 30S ribosomal subunit. Contacts proteins S4 and S8.

Its function is as follows. With S4 and S12 plays an important role in translational accuracy. Functionally, located at the back of the 30S subunit body where it stabilizes the conformation of the head with respect to the body. In Frankia casuarinae (strain DSM 45818 / CECT 9043 / HFP020203 / CcI3), this protein is Small ribosomal subunit protein uS5.